The following is a 754-amino-acid chain: MNPSGSIGVLEQNGEEHLAAPILGPSVNSDNPQERIQARRLRIAARQEARRREALGEYLDGKKESEEEQSKSYKQKEESRLKLTKLLLCGTELVTNIQVAADIREIHRRVEEEETKRQRLEKLENEVKTSQDKFDEITSKWEEGRQKRIPQELWEMLNNQQVHCAGLVEDKNKLISELQQELKIKDDQYVKDLKKQSEDITVLLERMEEQVKSVMKNFRQELNYIEKAFESERQELLTTNKKKWERALQAHNAKELEYLINRMKRVEDYEKQLNRQRVWDCEEYNSIKIKLEQDVQILEQQLQQMKATYQLNQEKLEYNFQVLKKRDEESTVIKSQQKRKLNRLHDILNNLRTKYSKQIKQFQEDNQSLTSDYKRLVTQFKDLQKAIRHFIIIDQDKFREIWLMNEAEAKELAQRAFDVDKIIHSQHLGLPWKIPNFWFLNNVGPISLQQQQKSVTQILEELLLQSEDEGTETAMSEDESYMDLPNQVSAKTTKKILVLLCDESGFLIESKLLSLLLPLEKSECYLLRLDAIFSALGIESEDDLYKMVNFFLRFKAHHLSSAQVSISTHSNAERTSLVSALQHMSLMSQTDRRSSASKSDGDPTELEDQQGSDNGSLMGRELVEQEDLSSPMFIHPNDVLKILDAFVTGLKKPKDARPVQRLKKDTRNNLKDTEYWESLAMVIPFSKQNLWDALFKALEKYYLVLTQRAKLLMENDSLEQQNAEMQSLLQQYLQAKVNLELQVPPTQGFRMPSK.

Disordered regions lie at residues 1–32 (MNPSGSIGVLEQNGEEHLAAPILGPSVNSDNP) and 55–76 (LGEYLDGKKESEEEQSKSYKQK). Positions 98-388 (QVAADIREIH…QFKDLQKAIR (291 aa)) form a coiled coil. The segment at 587–616 (MSQTDRRSSASKSDGDPTELEDQQGSDNGS) is disordered. Residues 704 to 743 (VLTQRAKLLMENDSLEQQNAEMQSLLQQYLQAKVNLELQV) adopt a coiled-coil conformation.

This sequence belongs to the DRC1 family. As to quaternary structure, component of the nexin-dynein regulatory complex (N-DRC). Interacts with CCDC65/DRC2, DRC3, GAS8/DRC4 and TCTE1/DRC5.

The protein resides in the cytoplasm. It localises to the cytoskeleton. Its subcellular location is the cilium axoneme. It is found in the flagellum axoneme. Functionally, component of the nexin-dynein regulatory complex (N-DRC) a key regulator of ciliary/flagellar motility which maintains the alignment and integrity of the distal axoneme and regulates microtubule sliding in motile axonemes. Plays a critical role in the assembly of N-DRC and also stabilizes the assembly of multiple inner dynein arms and radial spokes. Coassembles with CCDC65/DRC2 to form a central scaffold needed for assembly of the N-DRC and its attachment to the outer doublet microtubules. This chain is Dynein regulatory complex protein 1 (Drc1), found in Rattus norvegicus (Rat).